Consider the following 84-residue polypeptide: Minor capsid protein P30 (84 aa).

Dimer.

It is found in the virion. Minor capsid protein essential for stable capsid assembly of complete particles. This chain is Minor capsid protein P30 (XXX), found in Enterobacteria phage PRD1 (Bacteriophage PRD1).